Consider the following 350-residue polypeptide: Zona pellucida-binding protein 1 (350 aa).

Residues 1–44 form the signal peptide; the sequence is MEALAPGRAPRGRRRAGASGSVLSPLSLAAVLLCALLRAPPAVG. N-linked (GlcNAc...) asparagine glycosylation is found at asparagine 113, asparagine 186, and asparagine 339.

This sequence belongs to the zona pellucida-binding protein Sp38 family. In terms of processing, N-glycosylated. Expressed in testis (at protein level). Expressed in male germ cells.

The protein resides in the cytoplasmic vesicle. It is found in the secretory vesicle. The protein localises to the acrosome. It localises to the acrosome membrane. Its subcellular location is the secreted. Functionally, plays a role in acrosome compaction and sperm morphogenesis. Is implicated in sperm-oocyte interaction during fertilization. This Mus musculus (Mouse) protein is Zona pellucida-binding protein 1 (Zpbp).